The chain runs to 378 residues: Queuine tRNA-ribosyltransferase (378 aa).

Asp90 acts as the Proton acceptor in catalysis. Residues 90-94 (DSGGF), Asp144, Gln188, and Gly220 each bind substrate. The interval 251–257 (GVGTPED) is RNA binding. The active-site Nucleophile is the Asp270. Residues 275 to 279 (TRNAR) are RNA binding; important for wobble base 34 recognition. Zn(2+)-binding residues include Cys308, Cys310, Cys313, and His339.

It belongs to the queuine tRNA-ribosyltransferase family. As to quaternary structure, homodimer. Within each dimer, one monomer is responsible for RNA recognition and catalysis, while the other monomer binds to the replacement base PreQ1. Zn(2+) is required as a cofactor.

The catalysed reaction is 7-aminomethyl-7-carbaguanine + guanosine(34) in tRNA = 7-aminomethyl-7-carbaguanosine(34) in tRNA + guanine. The protein operates within tRNA modification; tRNA-queuosine biosynthesis. Its function is as follows. Catalyzes the base-exchange of a guanine (G) residue with the queuine precursor 7-aminomethyl-7-deazaguanine (PreQ1) at position 34 (anticodon wobble position) in tRNAs with GU(N) anticodons (tRNA-Asp, -Asn, -His and -Tyr). Catalysis occurs through a double-displacement mechanism. The nucleophile active site attacks the C1' of nucleotide 34 to detach the guanine base from the RNA, forming a covalent enzyme-RNA intermediate. The proton acceptor active site deprotonates the incoming PreQ1, allowing a nucleophilic attack on the C1' of the ribose to form the product. After dissociation, two additional enzymatic reactions on the tRNA convert PreQ1 to queuine (Q), resulting in the hypermodified nucleoside queuosine (7-(((4,5-cis-dihydroxy-2-cyclopenten-1-yl)amino)methyl)-7-deazaguanosine). This Nautilia profundicola (strain ATCC BAA-1463 / DSM 18972 / AmH) protein is Queuine tRNA-ribosyltransferase.